A 372-amino-acid chain; its full sequence is tRNA 2-selenouridine synthase (372 aa).

Residues 17 to 140 (FLQDIPLIDV…LRNFLLTTLE (124 aa)) form the Rhodanese domain. Cysteine 100 acts as the S-selanylcysteine intermediate in catalysis.

It belongs to the SelU family. Monomer.

It catalyses the reaction 5-methylaminomethyl-2-thiouridine(34) in tRNA + selenophosphate + (2E)-geranyl diphosphate + H2O + H(+) = 5-methylaminomethyl-2-selenouridine(34) in tRNA + (2E)-thiogeraniol + phosphate + diphosphate. The enzyme catalyses 5-methylaminomethyl-2-thiouridine(34) in tRNA + (2E)-geranyl diphosphate = 5-methylaminomethyl-S-(2E)-geranyl-thiouridine(34) in tRNA + diphosphate. It carries out the reaction 5-methylaminomethyl-S-(2E)-geranyl-thiouridine(34) in tRNA + selenophosphate + H(+) = 5-methylaminomethyl-2-(Se-phospho)selenouridine(34) in tRNA + (2E)-thiogeraniol. The catalysed reaction is 5-methylaminomethyl-2-(Se-phospho)selenouridine(34) in tRNA + H2O = 5-methylaminomethyl-2-selenouridine(34) in tRNA + phosphate. Involved in the post-transcriptional modification of the uridine at the wobble position (U34) of tRNA(Lys), tRNA(Glu) and tRNA(Gln). Catalyzes the conversion of 2-thiouridine (S2U-RNA) to 2-selenouridine (Se2U-RNA). Acts in a two-step process involving geranylation of 2-thiouridine (S2U) to S-geranyl-2-thiouridine (geS2U) and subsequent selenation of the latter derivative to 2-selenouridine (Se2U) in the tRNA chain. This is tRNA 2-selenouridine synthase from Serratia proteamaculans (strain 568).